Consider the following 901-residue polypeptide: Nuclear factor of activated T-cells, cytoplasmic 4 (901 aa).

Disordered stretches follow at residues L15–W179 and N203–V362. Over residues I61–S81 the composition is skewed to pro residues. Positions G96–R109 are enriched in gly residues. The tract at residues P114–T119 is calcineurin-binding. Low complexity predominate over residues P114–P123. Residues G151–A165 are compositionally biased toward gly residues. Low complexity predominate over residues F166–W179. Phosphoserine; by MAPK7 and MAPK14 occurs at positions 168 and 170. Phosphoserine; by MAPK8 and MAPK9 is present on residues S213 and S217. The stretch at S213–D229 is one SP 1 repeat. The 2 approximate SP repeats stretch occupies residues S213–E293. 2 stretches are compositionally biased toward pro residues: residues L215–P227 and G254–A263. The Nuclear localization signal motif lies at K268–R270. A compositionally biased stretch (low complexity) spans S272–G288. Residues P277–E293 form an SP 2; approximate repeat. Position 289 is a phosphoserine (S289). At S334 the chain carries Phosphoserine; by RPS6KA3. S344 is subject to Phosphoserine. The 182-residue stretch at S401–A582 folds into the RHD domain. The DNA-binding element occupies R430–G437. The IPT/TIG domain maps to P586–F683. The Nuclear localization signal signature appears at R672 to K674. K689 is covalently cross-linked (Glycyl lysine isopeptide (Lys-Gly) (interchain with G-Cter in SUMO2)). Disordered stretches follow at residues D695–P721 and P827–S869.

As to quaternary structure, member of the multicomponent NFATC transcription complex that consists of at least two components, a pre-existing cytoplasmic component NFATC2 and an inducible nuclear component NFATC1. Other NFAT proteins, such as NFATC3, or members of the activating protein-1 (AP-1) family and MAF can also bind the complex. NFAT proteins can bind DNA as monomers or dimers. Component of a promoter-binding complex composed of STAT3, NFATC3 and NFATC4; complex formation is enhanced by calcineurin. Interacts with CREBBP; this interaction potentiates transcription activation. Interacts with MAPK8/JNK1 and MAPK9/JNK2. Interacts with GATA4 (via the second Zn finger). Interacts (via N-terminus) with IRAK1 (via C-terminus). Interacts with RPS6KA3. Interacts with HOMER1, HOMER2 and HOMER3; this interaction competes with calcineurin/PPP3CA-binding and hence prevents NFATC4 dephosphorylation and activation. Interacts with ESR1 and ESR2; this interaction decreases NFATC4 transcriptional activity. Interacts with MTOR and MAPK7/ERK5. Interacts with TRIM17; this interaction prevents NFATC3 nuclear localization. Interacts with TCF25 (via C-terminus); the interaction leads to suppression of NFATC4 transcription factor activity and is reduced following stimulation with angiotensin-2. Phosphorylated by NFATC-kinases; dephosphorylated by calcineurin/PPP3CA. Phosphorylated on Ser-168 and Ser-170 by MTOR, IRAK1, MAPK7/ERK5 and MAPK14/p38, on Ser-213 and Ser-217 by MAPK8 and MAPK9, and on Ser-289 and Ser-344 by RPS6KA3. Phosphorylated by GSK3B. Phosphorylation by GSK3B markedly increases NFATC4 ubiquitination. Phosphorylation by MAPK8/JNK1, MAPK9/JNK2 and RPS6KA3 may stimulate NFATC4 transcriptional activity. Phosphorylation at Ser-168 and Ser-170 is stimulated by UV irradiation. In terms of processing, ubiquitinated, leading to degradation by the proteasome. Ubiquitination may be stimulated by GSK3B-dependent phosphorylation. Polyubiquitin linkage mainly occurs through 'Lys-48'. In terms of tissue distribution, widely expressed. In the brain, expressed in neurons. Expressed in the hippocampus (at protein level). In the hippocampus, expressed in both the CA1-CA3 pyramidal cells and the dentate gyrus granular cells. Expressed in a subset of hippocampal cells representing adult-born neurons (at protein level). Expressed in the submandibular gland (at protein level). In the olfactory system, expressed at low levels in the glomerular and granular layers and in the mitral cell layer. In the cerebellum, expressed at moderate levels in granular neurons. Expressed at moderate levels in the choroid plexus and ependymal cells. Expressed in neurons of the cochlear nucleus (at protein level). Expressed at low levels in the heart (at protein level). Expressed in ventricular cardiomyocytes (at protein level). Expressed in the lung.

It is found in the cytoplasm. The protein localises to the nucleus. Ca(2+)-regulated transcription factor that is involved in several processes, including the development and function of the immune, cardiovascular, musculoskeletal, and nervous systems. Involved in T-cell activation, stimulating the transcription of cytokine genes, including that of IL2 and IL4. Following JAK/STAT signaling activation and as part of a complex with NFATC3 and STAT3, binds to the alpha-beta E4 promoter region of CRYAB and activates transcription in cardiomyocytes. Along with NFATC3, involved in embryonic heart development. Involved in mitochondrial energy metabolism required for cardiac morphogenesis and function. Transactivates many genes involved in heart physiology. Along with GATA4, binds to and activates NPPB/BNP promoter. Activates NPPA/ANP/ANF and MYH7/beta-MHC transcription. Binds to and transactivates AGTR2 gene promoter. Involved in the regulation of adult hippocampal neurogenesis. Involved in BDNF-driven pro-survival signaling in hippocampal adult-born neurons. Involved in the formation of long-term spatial memory and long-term potentiation. In cochlear nucleus neurons, may play a role in deafferentation-induced apoptosis during a developmental critical period when auditory neurons depend on afferent input for survival. Binds to and activates the BACE1/Beta-secretase 1 promoter, hence may regulate the proteolytic processing of the amyloid precursor protein (APP). Plays a role in adipocyte differentiation. May be involved in myoblast differentiation into myotubes. Binds the consensus DNA sequence 5'-GGAAAAT-3'. In the presence of CREBBP, activates TNF transcription. Binds to PPARG gene promoter and regulates its activity. Binds to PPARG and REG3G gene promoters. This Mus musculus (Mouse) protein is Nuclear factor of activated T-cells, cytoplasmic 4.